Reading from the N-terminus, the 165-residue chain is Large ribosomal subunit protein uL11A (165 aa).

An N5-methylarginine modification is found at arginine 67.

It belongs to the universal ribosomal protein uL11 family. In terms of assembly, component of the large ribosomal subunit (LSU). Mature yeast ribosomes consist of a small (40S) and a large (60S) subunit. The 40S small subunit contains 1 molecule of ribosomal RNA (18S rRNA) and at least 33 different proteins. The large 60S subunit contains 3 rRNA molecules (25S, 5.8S and 5S rRNA) and at least 46 different proteins.

The protein localises to the cytoplasm. It is found in the nucleus. Its subcellular location is the nucleolus. Its function is as follows. This protein binds directly to 26S ribosomal RNA. In terms of biological role, component of the ribosome, a large ribonucleoprotein complex responsible for the synthesis of proteins in the cell. The small ribosomal subunit (SSU) binds messenger RNAs (mRNAs) and translates the encoded message by selecting cognate aminoacyl-transfer RNA (tRNA) molecules. The large subunit (LSU) contains the ribosomal catalytic site termed the peptidyl transferase center (PTC), which catalyzes the formation of peptide bonds, thereby polymerizing the amino acids delivered by tRNAs into a polypeptide chain. The nascent polypeptides leave the ribosome through a tunnel in the LSU and interact with protein factors that function in enzymatic processing, targeting, and the membrane insertion of nascent chains at the exit of the ribosomal tunnel. This chain is Large ribosomal subunit protein uL11A (rpl1201), found in Schizosaccharomyces pombe (strain 972 / ATCC 24843) (Fission yeast).